Consider the following 346-residue polypeptide: Elongation factor Ts (346 aa).

The involved in Mg(2+) ion dislocation from EF-Tu stretch occupies residues 80–83; it reads TDFV.

It belongs to the EF-Ts family.

The protein localises to the cytoplasm. In terms of biological role, associates with the EF-Tu.GDP complex and induces the exchange of GDP to GTP. It remains bound to the aminoacyl-tRNA.EF-Tu.GTP complex up to the GTP hydrolysis stage on the ribosome. This chain is Elongation factor Ts, found in Streptococcus suis (strain 98HAH33).